The chain runs to 176 residues: MIDDDGYRPNVGIVICNRQGQVMWARRFGQHSWQFPQGGINPGESAEQAMYRELFEEVGLSRKDVRILASTRNWLRYKLPKRLVRWDTKPVCIGQKQKWFLLQLVSGDAEINMQTSSTPEFDGWRWVSYWYPVRQVVSFKRDVYRRVMKEFASVVMSLQENTPKPQNASAYRRKRG.

Residues 6 to 149 enclose the Nudix hydrolase domain; sequence GYRPNVGIVI…KRDVYRRVMK (144 aa). The Nudix box signature appears at 38 to 59; that stretch reads GGINPGESAEQAMYRELFEEVG.

The protein belongs to the Nudix hydrolase family. RppH subfamily. A divalent metal cation serves as cofactor.

Its function is as follows. Accelerates the degradation of transcripts by removing pyrophosphate from the 5'-end of triphosphorylated RNA, leading to a more labile monophosphorylated state that can stimulate subsequent ribonuclease cleavage. This is RNA pyrophosphohydrolase from Shigella dysenteriae serotype 1 (strain Sd197).